The chain runs to 246 residues: MSKPKDKERINEKRRAKFKELQKKIGIFFTNEKLLIQAFTHSSYVNEHRRRPHEDNERLEFLGDAVLELTVSQYLFKKFPHMSEGELTKLRAAIVCEPSLVKFANALSFGELVLLGKGEELTGGRTRPALLADVFEAFIGALYLDQGMDAVMQFLGQTIFPKIDEGAFSHVMDFKSQLQELVQRDGIGVLEYSILEEKGPAHNKEFVSRVSLNGQELGIGVGKSKKEAEQHAAQMALQKLKTIGKE.

In terms of domain architecture, RNase III spans Phe18 to Gly147. Glu60 is a binding site for Mg(2+). Asp64 is an active-site residue. 2 residues coordinate Mg(2+): Asp133 and Glu136. Residue Glu136 is part of the active site. A DRBM domain is found at Asp173–Thr242.

It belongs to the ribonuclease III family. In terms of assembly, homodimer. Mg(2+) is required as a cofactor.

The protein localises to the cytoplasm. It carries out the reaction Endonucleolytic cleavage to 5'-phosphomonoester.. Its function is as follows. Digests double-stranded RNA. Involved in the processing of primary rRNA transcript to yield the immediate precursors to the large and small rRNAs (23S and 16S). Processes some mRNAs, and tRNAs when they are encoded in the rRNA operon. Processes pre-crRNA and tracrRNA of type II CRISPR loci if present in the organism. This chain is Ribonuclease 3, found in Geobacillus sp. (strain WCH70).